Consider the following 252-residue polypeptide: MEGPASPAPAPGALPYYVAFSQLLGLTVVAMTGAWLGMYRGGIAWESALQFNVHPLCMVIGLVFLQGDALLVYRVFRNEAKRTTKVLHGLLHVFAFVIALVGLVAVFEHHRKKGYADLYSLHSWCGILVFALFFAQWLVGFSFFLFPGASFSLRSRYRPQHVFFGAAIFLLSVATALLGLKEALLFELGTKYSTFEPEGVLANVLGLLLAAFATVVLYILTRADWKRPLQAEEQALSMDFKTLTEGDSPSSQ.

N-acetylmethionine is present on methionine 1. At 1-17 the chain is on the cytoplasmic side; the sequence is MEGPASPAPAPGALPYY. Residues 18-38 traverse the membrane as a helical segment; it reads VAFSQLLGLTVVAMTGAWLGM. The Cytochrome b561 domain occupies 20–221; that stretch reads FSQLLGLTVV…FATVVLYILT (202 aa). At 39-52 the chain is on the vesicular side; it reads YRGGIAWESALQFN. Residues 53-73 form a helical membrane-spanning segment; the sequence is VHPLCMVIGLVFLQGDALLVY. Heme b is bound by residues histidine 54, arginine 74, and lysine 81. Residues 74–86 lie on the Cytoplasmic side of the membrane; it reads RVFRNEAKRTTKV. L-ascorbate contacts are provided by lysine 81 and lysine 85. The chain crosses the membrane as a helical span at residues 87-107; it reads LHGLLHVFAFVIALVGLVAVF. Heme b-binding positions include histidine 88, 117 to 120, and histidine 122; that span reads DLYS. Topologically, residues 108-125 are vesicular; sequence EHHRKKGYADLYSLHSWC. A helical membrane pass occupies residues 126 to 146; sequence GILVFALFFAQWLVGFSFFLF. Over 147–159 the chain is Cytoplasmic; it reads PGASFSLRSRYRP. Arginine 154 contributes to the L-ascorbate binding site. Residues 160–180 form a helical membrane-spanning segment; the sequence is QHVFFGAAIFLLSVATALLGL. The heme b site is built by histidine 161 and glutamate 182. The Vesicular portion of the chain corresponds to 181 to 199; sequence KEALLFELGTKYSTFEPEG. Residues 200-220 traverse the membrane as a helical segment; sequence VLANVLGLLLAAFATVVLYIL. At 221-252 the chain is on the cytoplasmic side; that stretch reads TRADWKRPLQAEEQALSMDFKTLTEGDSPSSQ. Lysine 226 is a heme b binding site. Phosphoserine is present on residues serine 248 and serine 250.

Heme b serves as cofactor.

It is found in the cytoplasmic vesicle. The protein localises to the secretory vesicle. Its subcellular location is the chromaffin granule membrane. It carries out the reaction monodehydro-L-ascorbate radical(out) + L-ascorbate(in) = monodehydro-L-ascorbate radical(in) + L-ascorbate(out). Transmembrane reductase that uses ascorbate as an electron donor in the cytoplasm and transfers electrons across membranes to reduce monodehydro-L-ascorbate radical in the lumen of secretory vesicles. It is therefore involved the regeneration and homeostasis within secretory vesicles of ascorbate which in turn provides reducing equivalents needed to support the activity of intravesicular enzymes. This Ovis aries (Sheep) protein is Transmembrane ascorbate-dependent reductase CYB561 (CYB561).